Consider the following 330-residue polypeptide: Stimulated by retinoic acid gene 8 protein homolog (330 aa).

The Nuclear localization signal (NLS) motif lies at Arg50–Arg55. Positions Gln88–Ala112 form a coiled coil.

In terms of assembly, interacts with XPO1. Interacts with MEIOSIN. In terms of processing, phosphorylated. As to expression, expressed specifically in testis and fetal ovaries.

Its subcellular location is the cytoplasm. The protein localises to the nucleus. Its function is as follows. Meiosis-inducer required for the transition into meiosis for both female and male germ cells. In female germ cells, acts downstream of ZGLP1 as a key effector of the meiotic program: required for premeiotic DNA replication and subsequent events in meiotic prophase. During spermatogenesis, next to its role in meiotic initiation, promotes (but is not required for) spermatogonial differentiation. In complex with MEIOSIN, directly activates the transcription of a subset of critical meiotic genes playing a central role in cell-cycle switching from mitosis to meiosis. The chain is Stimulated by retinoic acid gene 8 protein homolog from Homo sapiens (Human).